The primary structure comprises 407 residues: Na(+)-translocating NADH-quinone reductase subunit F (407 aa).

Residues 6 to 26 form a helical membrane-spanning segment; that stretch reads IFLAIGMFTAIVLGLVAIILV. A 2Fe-2S ferredoxin-type domain is found at 35–127; that stretch reads GDVTIQINGE…DMQIRVPEEV (93 aa). The [2Fe-2S] cluster site is built by C70, C76, C79, and C111. Residues 130–269 enclose the FAD-binding FR-type domain; sequence VKKWECTVES…YGPFGEFFAK (140 aa).

This sequence belongs to the NqrF family. Composed of six subunits; NqrA, NqrB, NqrC, NqrD, NqrE and NqrF. [2Fe-2S] cluster serves as cofactor. It depends on FAD as a cofactor.

It localises to the cell inner membrane. It carries out the reaction a ubiquinone + n Na(+)(in) + NADH + H(+) = a ubiquinol + n Na(+)(out) + NAD(+). Functionally, NQR complex catalyzes the reduction of ubiquinone-1 to ubiquinol by two successive reactions, coupled with the transport of Na(+) ions from the cytoplasm to the periplasm. The first step is catalyzed by NqrF, which accepts electrons from NADH and reduces ubiquinone-1 to ubisemiquinone by a one-electron transfer pathway. The polypeptide is Na(+)-translocating NADH-quinone reductase subunit F (Pseudomonas paraeruginosa (strain DSM 24068 / PA7) (Pseudomonas aeruginosa (strain PA7))).